The sequence spans 154 residues: uncharacterized protein (154 aa).

4 helical membrane-spanning segments follow: residues 20-42 (FRLFLAFNFFVYGLAKVVIGQFG), 62-84 (FFGYSHVYELFIGFGEILAAVLL), 91-109 (ALGAVIFMPIIVNIVLINY), and 113-132 (IGVQDLSTILMVMCLILLWM).

It is found in the cell membrane. This is an uncharacterized protein from Bacillus subtilis (strain 168).